The chain runs to 510 residues: UDP-galactopyranose mutase (510 aa).

4 residues coordinate FAD: Thr-18, Asp-38, Leu-46, and Gly-61. Residues Gly-61 and Gly-62 each contribute to the UDP-alpha-D-galactose site. Position 63 (His-63) interacts with FAD. Residues His-68, Arg-91, and Ser-93 each coordinate NADH. 4 residues coordinate NADPH: His-68, Arg-91, Ser-93, and Tyr-104. Tyr-104, Gln-107, Met-159, Tyr-162, Asn-163, Trp-167, and Arg-182 together coordinate UDP-alpha-D-galactose. Asn-203 contacts NADPH. Asn-207 is a binding site for UDP-alpha-D-galactose. Residue Val-242 coordinates FAD. NADPH contacts are provided by Trp-315 and Tyr-317. Tyr-317, Arg-327, and Tyr-419 together coordinate UDP-alpha-D-galactose. Position 327 (Arg-327) interacts with FAD. 2 residues coordinate NADH: Tyr-419 and Arg-447. 2 residues coordinate NADPH: Tyr-419 and Arg-447. Arg-447 is an FAD binding site. Tyr-453 contributes to the UDP-alpha-D-galactose binding site. Residues Gly-456, Asn-457, and Gln-458 each coordinate FAD. A UDP-alpha-D-galactose-binding site is contributed by Asn-457. An NADH-binding site is contributed by Asn-457. Asn-457 lines the NADPH pocket. His-460 provides a ligand contact to NADPH. Position 461 (Ser-461) interacts with FAD.

Belongs to the UDP-galactopyranose/dTDP-fucopyranose mutase family. As to quaternary structure, homotetramer. FAD is required as a cofactor.

It carries out the reaction UDP-alpha-D-galactose = UDP-alpha-D-galactofuranose. In terms of biological role, UDP-galactopyranose mutase, key flavoenzyme of galactofuranose metabolism that catalyzes the 6-to-5 ring contraction of UDP-galactopyranose to UDP-galactofuranose, the donor used by various galacto-furanosyltransferases. Controls the biosynthesis of galactomannan and galactofuranose containing glycoconjugates. The flavin functions as nucleophile, forming a flavin-sugar adduct that facilitates galactose-ring opening and contraction. The binding of UDP-galactopyranose induces profound conformational changes in the enzyme and two loops on opposite sides of the active site move toward each other by over 10 Angstroms to cover the substrate and create a closed active site. The protein is UDP-galactopyranose mutase of Aspergillus fumigatus (Neosartorya fumigata).